A 344-amino-acid chain; its full sequence is Mitochondrial mRNA pseudouridine synthase Rpusd3 (344 aa).

Residues 1–36 (MGALRVLRYVSMIWRPELGSCARQRDAGFGTEARRP) constitute a mitochondrion transit peptide. Positions 25–53 (RDAGFGTEARRPSQPHRSSKHKDLVEDQP) are disordered.

It belongs to the pseudouridine synthase RluA family. In terms of assembly, forms a regulatory protein-RNA complex, consisting of RCC1L, NGRN, RPUSD3, RPUSD4, TRUB2, FASTKD2 and 16S mt-rRNA.

It localises to the mitochondrion matrix. The enzyme catalyses a uridine in mRNA = a pseudouridine in mRNA. Catalyzes uridine to pseudouridine isomerization (pseudouridylation) of specific mitochondrial mRNAs (mt-mRNAs), a post-transcriptional modification necessary for their translation. Acts at position 390 in COXI mt-mRNA and at position 697-699 in mitochondrial COXIII mt-mRNA. As a component of a functional protein-RNA module, consisting of RCC1L, NGRN, RPUSD3, RPUSD4, TRUB2, FASTKD2 and 16S mitochondrial ribosomal RNA (16S mt-rRNA), controls 16S mt-rRNA abundance and may play a role in mitochondrial ribosome biogenesis. The polypeptide is Mitochondrial mRNA pseudouridine synthase Rpusd3 (Rpusd3) (Mus musculus (Mouse)).